The sequence spans 283 residues: 4-hydroxy-3-methylbut-2-enyl diphosphate reductase (283 aa).

Cysteine 12 serves as a coordination point for [4Fe-4S] cluster. 2 residues coordinate (2E)-4-hydroxy-3-methylbut-2-enyl diphosphate: histidine 41 and histidine 74. The dimethylallyl diphosphate site is built by histidine 41 and histidine 74. Isopentenyl diphosphate is bound by residues histidine 41 and histidine 74. Cysteine 96 is a binding site for [4Fe-4S] cluster. Histidine 124 is a binding site for (2E)-4-hydroxy-3-methylbut-2-enyl diphosphate. Residue histidine 124 coordinates dimethylallyl diphosphate. Histidine 124 lines the isopentenyl diphosphate pocket. The active-site Proton donor is glutamate 126. Threonine 161 is a (2E)-4-hydroxy-3-methylbut-2-enyl diphosphate binding site. Cysteine 189 contributes to the [4Fe-4S] cluster binding site. Serine 217, asparagine 219, and serine 261 together coordinate (2E)-4-hydroxy-3-methylbut-2-enyl diphosphate. The dimethylallyl diphosphate site is built by serine 217, asparagine 219, and serine 261. Residues serine 217, asparagine 219, and serine 261 each contribute to the isopentenyl diphosphate site.

This sequence belongs to the IspH family. The cofactor is [4Fe-4S] cluster.

It carries out the reaction isopentenyl diphosphate + 2 oxidized [2Fe-2S]-[ferredoxin] + H2O = (2E)-4-hydroxy-3-methylbut-2-enyl diphosphate + 2 reduced [2Fe-2S]-[ferredoxin] + 2 H(+). The enzyme catalyses dimethylallyl diphosphate + 2 oxidized [2Fe-2S]-[ferredoxin] + H2O = (2E)-4-hydroxy-3-methylbut-2-enyl diphosphate + 2 reduced [2Fe-2S]-[ferredoxin] + 2 H(+). The protein operates within isoprenoid biosynthesis; dimethylallyl diphosphate biosynthesis; dimethylallyl diphosphate from (2E)-4-hydroxy-3-methylbutenyl diphosphate: step 1/1. It functions in the pathway isoprenoid biosynthesis; isopentenyl diphosphate biosynthesis via DXP pathway; isopentenyl diphosphate from 1-deoxy-D-xylulose 5-phosphate: step 6/6. Catalyzes the conversion of 1-hydroxy-2-methyl-2-(E)-butenyl 4-diphosphate (HMBPP) into a mixture of isopentenyl diphosphate (IPP) and dimethylallyl diphosphate (DMAPP). Acts in the terminal step of the DOXP/MEP pathway for isoprenoid precursor biosynthesis. In Anaeromyxobacter sp. (strain Fw109-5), this protein is 4-hydroxy-3-methylbut-2-enyl diphosphate reductase.